The primary structure comprises 416 residues: Vacuole membrane protein KMS1 (416 aa).

N-acetylglycine is present on Gly2. At 2–60 the chain is on the cytoplasmic side; that stretch reads GSAGVASSSSDVAISALREKHEKEVENLTLTTQPLNTLKLFVEATIQYIKRSISYLLAH. Residues 61–81 traverse the membrane as a helical segment; that stretch reads GGWFILITTLLVVSGGLLVTV. Over 82–101 the chain is Lumenal; sequence DGPHGKHVEEVLEYVRYGLW. A helical membrane pass occupies residues 102–124; sequence WIALGVASSIGLGSGLHTFVLYL. Residues 125–257 are Cytoplasmic-facing; the sequence is GPHIALFTLK…WLLTHSQHLN (133 aa). Residues 258-278 traverse the membrane as a helical segment; that stretch reads FFTVLVLASVPNPLFDLAGIM. Topologically, residues 279–289 are lumenal; sequence CGQFGIPFWEF. Residues 290 to 312 form a helical membrane-spanning segment; that stretch reads FLATLIGKAIIKTHIQTIFIICV. Topologically, residues 313–323 are cytoplasmic; it reads CNNQLLDWMEN. The helical transmembrane segment at 324–344 threads the bilayer; it reads ELIWILSHVPGLASMLPGLTA. The Lumenal portion of the chain corresponds to 345-372; the sequence is KLHAMKEKYIDAPSPVPSHIKVKKWDFS. Residues 373–393 traverse the membrane as a helical segment; that stretch reads FASIWNGIVWLMLLNFFVKIV. Over 394–416 the chain is Cytoplasmic; it reads TATAQRHLKKKQEKEMATLTHSD.

It belongs to the VMP1 family.

The protein resides in the endoplasmic reticulum membrane. Functionally, involved in the early secretory pathway. Required for the correct export of secretory products from the endoplasmic reticulum (ER) and involved in the maintenance of ER integrity. The chain is Vacuole membrane protein KMS1 from Arabidopsis thaliana (Mouse-ear cress).